We begin with the raw amino-acid sequence, 310 residues long: Pantothenate kinase (310 aa).

Residue Gly95–Ser102 participates in ATP binding.

The protein belongs to the prokaryotic pantothenate kinase family.

The protein resides in the cytoplasm. The enzyme catalyses (R)-pantothenate + ATP = (R)-4'-phosphopantothenate + ADP + H(+). The protein operates within cofactor biosynthesis; coenzyme A biosynthesis; CoA from (R)-pantothenate: step 1/5. The chain is Pantothenate kinase from Rhodococcus opacus (strain B4).